A 146-amino-acid polypeptide reads, in one-letter code: Large ribosomal subunit protein uL15 (146 aa).

The segment covering 1–13 has biased composition (basic and acidic residues); that stretch reads MKLNELHPSEGSR. A disordered region spans residues 1-56; the sequence is MKLNELHPSEGSRHARKRVGRGTSSGFGKTSGRGQKGQHARSGGNTRLGFEGGQMP. The span at 23–35 shows a compositional bias: gly residues; it reads TSSGFGKTSGRGQ.

This sequence belongs to the universal ribosomal protein uL15 family. Part of the 50S ribosomal subunit.

Functionally, binds to the 23S rRNA. The polypeptide is Large ribosomal subunit protein uL15 (Lactobacillus delbrueckii subsp. bulgaricus (strain ATCC 11842 / DSM 20081 / BCRC 10696 / JCM 1002 / NBRC 13953 / NCIMB 11778 / NCTC 12712 / WDCM 00102 / Lb 14)).